Here is a 753-residue protein sequence, read N- to C-terminus: Polyribonucleotide nucleotidyltransferase (753 aa).

Residues D543 and D549 each coordinate Mg(2+). The 60-residue stretch at 609 to 668 (PRITTVKIPVAKIGELIGPKGKNINALTEETGANISIEDDGTVFISAADGASAEAAIEKI) folds into the KH domain. Positions 680–749 (GERFLGTVVK…NRGKISLVPV (70 aa)) constitute an S1 motif domain.

This sequence belongs to the polyribonucleotide nucleotidyltransferase family. Requires Mg(2+) as cofactor.

Its subcellular location is the cytoplasm. The catalysed reaction is RNA(n+1) + phosphate = RNA(n) + a ribonucleoside 5'-diphosphate. Functionally, involved in mRNA degradation. Catalyzes the phosphorolysis of single-stranded polyribonucleotides processively in the 3'- to 5'-direction. The sequence is that of Polyribonucleotide nucleotidyltransferase from Corynebacterium glutamicum (strain R).